The primary structure comprises 324 residues: Homoserine kinase (324 aa).

100-110 (PLSSGMGSSAA) is a binding site for ATP.

Belongs to the GHMP kinase family. Homoserine kinase subfamily.

It localises to the cytoplasm. The enzyme catalyses L-homoserine + ATP = O-phospho-L-homoserine + ADP + H(+). It functions in the pathway amino-acid biosynthesis; L-threonine biosynthesis; L-threonine from L-aspartate: step 4/5. Its function is as follows. Catalyzes the ATP-dependent phosphorylation of L-homoserine to L-homoserine phosphate. This chain is Homoserine kinase, found in Chlorobaculum tepidum (strain ATCC 49652 / DSM 12025 / NBRC 103806 / TLS) (Chlorobium tepidum).